The primary structure comprises 352 residues: Bifunctional protein FolD 1, mitochondrial (352 aa).

Residues 1-23 (MLMIARKALASAHTKAFRLATRD) constitute a mitochondrion transit peptide.

It belongs to the tetrahydrofolate dehydrogenase/cyclohydrolase family. Homodimer.

It is found in the mitochondrion. The catalysed reaction is (6R)-5,10-methylene-5,6,7,8-tetrahydrofolate + NADP(+) = (6R)-5,10-methenyltetrahydrofolate + NADPH. It carries out the reaction (6R)-5,10-methenyltetrahydrofolate + H2O = (6R)-10-formyltetrahydrofolate + H(+). It functions in the pathway one-carbon metabolism; tetrahydrofolate interconversion. In terms of biological role, catalyzes the oxidation of 5,10-methylenetetrahydrofolate to 5,10-methenyltetrahydrofolate and then the hydrolysis of 5,10-methenyltetrahydrofolate to 10-formyltetrahydrofolate. The sequence is that of Bifunctional protein FolD 1, mitochondrial (FOLD1) from Arabidopsis thaliana (Mouse-ear cress).